The primary structure comprises 95 residues: Mammaglobin-B (95 aa).

A signal peptide spans 1-18 (MKLLMVLMLAALLLHCYA). An N-linked (GlcNAc...) asparagine glycan is attached at N68.

In terms of assembly, heterodimer of a lipophilin A and a lipophilin C (mammaglobin B) monomer associated head to head. Expressed in thymus, trachea, kidney, steroid responsive tissues (prostate, testis, uterus, breast and ovary) and salivary gland.

The protein resides in the secreted. Its function is as follows. May bind androgens and other steroids, may also bind estramustine, a chemotherapeutic agent used for prostate cancer. May be under transcriptional regulation of steroid hormones. This Homo sapiens (Human) protein is Mammaglobin-B (SCGB2A1).